Consider the following 88-residue polypeptide: MKFFLIFLVIFPIMGVLGKKNGYAVDSSGKVSECLLNNYCNNICTKVYYATSGYCCLLSCYCFGLDDDKAVLKIKDATKSYCDVQIIG.

Positions 1–18 are cleaved as a signal peptide; the sequence is MKFFLIFLVIFPIMGVLG. In terms of domain architecture, LCN-type CS-alpha/beta spans 20–83; the sequence is KNGYAVDSSG…IKDATKSYCD (64 aa). Cystine bridges form between C34–C55, C40–C60, C44–C62, and C56–C82. I87 bears the Isoleucine amide mark.

Belongs to the long (4 C-C) scorpion toxin superfamily. Sodium channel inhibitor family. Beta subfamily. Expressed by the venom gland.

It is found in the secreted. Excitatory insect beta-toxins induce a spastic paralysis. They bind voltage-independently at site-4 of sodium channels (Nav) and shift the voltage of activation toward more negative potentials thereby affecting sodium channel activation and promoting spontaneous and repetitive firing. This toxin is active only on insects. The protein is Beta-insect excitatory toxin BmKIT1 of Olivierus martensii (Manchurian scorpion).